Reading from the N-terminus, the 218-residue chain is Probable transaldolase (218 aa).

The active-site Schiff-base intermediate with substrate is the K83.

This sequence belongs to the transaldolase family. Type 3B subfamily.

The protein resides in the cytoplasm. The enzyme catalyses D-sedoheptulose 7-phosphate + D-glyceraldehyde 3-phosphate = D-erythrose 4-phosphate + beta-D-fructose 6-phosphate. The protein operates within carbohydrate degradation; pentose phosphate pathway; D-glyceraldehyde 3-phosphate and beta-D-fructose 6-phosphate from D-ribose 5-phosphate and D-xylulose 5-phosphate (non-oxidative stage): step 2/3. Its function is as follows. Transaldolase is important for the balance of metabolites in the pentose-phosphate pathway. The protein is Probable transaldolase of Kosmotoga olearia (strain ATCC BAA-1733 / DSM 21960 / TBF 19.5.1).